The chain runs to 41 residues: Large ribosomal subunit protein bL36 (41 aa).

The protein belongs to the bacterial ribosomal protein bL36 family.

This chain is Large ribosomal subunit protein bL36, found in Ruegeria sp. (strain TM1040) (Silicibacter sp.).